The sequence spans 111 residues: Ribonuclease P protein component (111 aa).

This sequence belongs to the RnpA family. Consists of a catalytic RNA component (M1 or rnpB) and a protein subunit.

The enzyme catalyses Endonucleolytic cleavage of RNA, removing 5'-extranucleotides from tRNA precursor.. Functionally, RNaseP catalyzes the removal of the 5'-leader sequence from pre-tRNA to produce the mature 5'-terminus. It can also cleave other RNA substrates such as 4.5S RNA. The protein component plays an auxiliary but essential role in vivo by binding to the 5'-leader sequence and broadening the substrate specificity of the ribozyme. In Borreliella afzelii (strain PKo) (Borrelia afzelii), this protein is Ribonuclease P protein component.